A 327-amino-acid polypeptide reads, in one-letter code: Aldo-keto reductase family 7 member A3 (327 aa).

Phosphoserine is present on serine 2. 3 residues coordinate NADP(+): methionine 13, arginine 18, and aspartate 40. The active-site Proton donor is the tyrosine 45. Histidine 109 contacts citrate. NADP(+) is bound by residues asparagine 140, asparagine 194, leucine 196, glycine 198, arginine 204, and arginine 218. Citrate-binding residues include tyrosine 228 and arginine 231. Residues serine 286, glutamine 290, glutamine 293, asparagine 294, and arginine 327 each contribute to the NADP(+) site.

This sequence belongs to the aldo/keto reductase family. Aldo/keto reductase 2 subfamily. Homodimer. Heterodimer with AKR7A2.

It is found in the cytoplasm. The enzyme catalyses a primary alcohol + NADP(+) = an aldehyde + NADPH + H(+). The catalysed reaction is aflatoxin B1 dialdehyde + NADPH + H(+) = aflatoxin B1 C(6a)-monoaldehyde + NADP(+). It carries out the reaction aflatoxin B1 dialdehyde + NADPH + H(+) = aflatoxin B1 C(8)-monoaldehyde + NADP(+). It catalyses the reaction aflatoxin B1 C(6a)-monoaldehyde + NADPH + 2 H(+) = aflatoxin B1 triol + NADP(+). With respect to regulation, inhibited by citrate. In terms of biological role, catalyzes the NADPH-dependent reduction of various carbonyl-containing compounds, including aldehydes, ketones, and toxic products from cellular metabolism or environmental exposure. Can reduce the dialdehyde form of aflatoxin B1 (AFB1) into alcohol derivatives, via monoaldehydes intermediates, thus preventing the formation of protein adducts that contribute to AFB1-induced toxicity. The polypeptide is Aldo-keto reductase family 7 member A3 (Rattus norvegicus (Rat)).